Consider the following 210-residue polypeptide: N-(5'-phosphoribosyl)anthranilate isomerase (210 aa).

Belongs to the TrpF family.

The catalysed reaction is N-(5-phospho-beta-D-ribosyl)anthranilate = 1-(2-carboxyphenylamino)-1-deoxy-D-ribulose 5-phosphate. The protein operates within amino-acid biosynthesis; L-tryptophan biosynthesis; L-tryptophan from chorismate: step 3/5. In Pseudomonas fluorescens (strain ATCC BAA-477 / NRRL B-23932 / Pf-5), this protein is N-(5'-phosphoribosyl)anthranilate isomerase.